A 152-amino-acid polypeptide reads, in one-letter code: UPF0225 protein YchJ (152 aa).

The protein belongs to the UPF0225 family.

The polypeptide is UPF0225 protein YchJ (Escherichia coli O17:K52:H18 (strain UMN026 / ExPEC)).